Consider the following 494-residue polypeptide: BTB/POZ domain and ankyrin repeat-containing protein NH5.1 (494 aa).

The BTB domain occupies 25–130 (SDVAFSVEGR…LYSGQASVAA (106 aa)). Residues 60 to 94 (NHQPPPPPPPLNWPMAGGGGGGSGGGGRGGAGGGG) are disordered. Residues 61 to 71 (HQPPPPPPPLN) are compositionally biased toward pro residues. A compositionally biased stretch (gly residues) spans 75–94 (AGGGGGGSGGGGRGGAGGGG). The C2HC NPR-type zinc-finger motif lies at 136–150 (LPGCGARGCWHTRCG). The Zn(2+) site is built by Cys-139, Cys-144, His-146, and Cys-149. 4 ANK repeats span residues 274–302 (NKIRRMRRALDAADIELVKLMVMGEGLDL), 303–333 (DDALAVHYAVQHCNRDVVKALLELGAADVNS), 338–367 (TGKTALHLAAEMVSPDMVSVLLDHHADPNS), and 371–405 (DGVTPLDVLRSLTSEFLFKGAVPGLTHIEPNKLRL). Disordered stretches follow at residues 421 to 443 (DGAPVTGGAEAGGSDGGNFPRSD) and 469 to 494 (AAGEGRKSNNGRGSPPPAMYFPNGFA).

The protein belongs to the plant 'ANKYRIN-BTB/POZ' family. 'NOOT-BOP-COCH-like' (NBCL) subfamily. As to quaternary structure, homodimer. Interacts with TGAL5, TGAL7, TGAL8 and TGAL9.

Its subcellular location is the nucleus. It is found in the cytoplasm. It functions in the pathway protein modification; protein ubiquitination. In terms of biological role, may act as a substrate-specific adapter of an E3 ubiquitin-protein ligase complex (CUL3-RBX1-BTB) which mediates the ubiquitination and subsequent proteasomal degradation of target proteins. Transcriptional co-regulator involved in the promotion of leaf and floral meristem fate and determinacy. Required for the abscission of senescent organs, probably by regulating the cell wall disorganization in abscission zones (AZs, e.g. pulvini at the base of leaves). The protein is BTB/POZ domain and ankyrin repeat-containing protein NH5.1 of Oryza sativa subsp. japonica (Rice).